The primary structure comprises 353 residues: Photosystem II D2 protein (353 aa).

Thr-2 is subject to N-acetylthreonine. Thr-2 carries the phosphothreonine modification. A helical membrane pass occupies residues 41 to 61; that stretch reads CAYFALGGWFTGTTFVTSWYT. His-118 lines the chlorophyll a pocket. A helical membrane pass occupies residues 125 to 141; the sequence is GFMLRQFELARSVQLRP. The pheophytin a site is built by Gln-130 and Asn-143. Residues 153 to 166 form a helical membrane-spanning segment; it reads VFVSVFLIYPLGQS. His-198 is a chlorophyll a binding site. The helical transmembrane segment at 208-228 threads the bilayer; that stretch reads AALLCAIHGATVENTLFEDGD. Positions 215 and 262 each coordinate a plastoquinone. Position 215 (His-215) interacts with Fe cation. His-269 contributes to the Fe cation binding site. Residues 279–295 traverse the membrane as a helical segment; it reads GLWMSALGVVGLALNLR.

Belongs to the reaction center PufL/M/PsbA/D family. As to quaternary structure, PSII is composed of 1 copy each of membrane proteins PsbA, PsbB, PsbC, PsbD, PsbE, PsbF, PsbH, PsbI, PsbJ, PsbK, PsbL, PsbM, PsbT, PsbX, PsbY, PsbZ, Psb30/Ycf12, at least 3 peripheral proteins of the oxygen-evolving complex and a large number of cofactors. It forms dimeric complexes. Requires The D1/D2 heterodimer binds P680, chlorophylls that are the primary electron donor of PSII, and subsequent electron acceptors. It shares a non-heme iron and each subunit binds pheophytin, quinone, additional chlorophylls, carotenoids and lipids. There is also a Cl(-1) ion associated with D1 and D2, which is required for oxygen evolution. The PSII complex binds additional chlorophylls, carotenoids and specific lipids. as cofactor.

Its subcellular location is the plastid. It is found in the chloroplast thylakoid membrane. The enzyme catalyses 2 a plastoquinone + 4 hnu + 2 H2O = 2 a plastoquinol + O2. Its function is as follows. Photosystem II (PSII) is a light-driven water:plastoquinone oxidoreductase that uses light energy to abstract electrons from H(2)O, generating O(2) and a proton gradient subsequently used for ATP formation. It consists of a core antenna complex that captures photons, and an electron transfer chain that converts photonic excitation into a charge separation. The D1/D2 (PsbA/PsbD) reaction center heterodimer binds P680, the primary electron donor of PSII as well as several subsequent electron acceptors. D2 is needed for assembly of a stable PSII complex. The chain is Photosystem II D2 protein from Coffea arabica (Arabian coffee).